Here is a 251-residue protein sequence, read N- to C-terminus: Imidazole glycerol phosphate synthase subunit HisF (251 aa).

Active-site residues include Asp-11 and Asp-130.

It belongs to the HisA/HisF family. In terms of assembly, heterodimer of HisH and HisF.

It is found in the cytoplasm. It catalyses the reaction 5-[(5-phospho-1-deoxy-D-ribulos-1-ylimino)methylamino]-1-(5-phospho-beta-D-ribosyl)imidazole-4-carboxamide + L-glutamine = D-erythro-1-(imidazol-4-yl)glycerol 3-phosphate + 5-amino-1-(5-phospho-beta-D-ribosyl)imidazole-4-carboxamide + L-glutamate + H(+). Its pathway is amino-acid biosynthesis; L-histidine biosynthesis; L-histidine from 5-phospho-alpha-D-ribose 1-diphosphate: step 5/9. In terms of biological role, IGPS catalyzes the conversion of PRFAR and glutamine to IGP, AICAR and glutamate. The HisF subunit catalyzes the cyclization activity that produces IGP and AICAR from PRFAR using the ammonia provided by the HisH subunit. In Prosthecochloris aestuarii (strain DSM 271 / SK 413), this protein is Imidazole glycerol phosphate synthase subunit HisF.